A 731-amino-acid chain; its full sequence is Elongation factor 2 (731 aa).

The 242-residue stretch at 19-260 (KHIRNIGIVA…MVVHHLPNPL (242 aa)) folds into the tr-type G domain. GTP is bound by residues 28-35 (AHIDHGKT), 94-98 (DTPGH), and 148-151 (NKVD). H597 is modified (diphthamide).

It belongs to the TRAFAC class translation factor GTPase superfamily. Classic translation factor GTPase family. EF-G/EF-2 subfamily.

It localises to the cytoplasm. Its function is as follows. Catalyzes the GTP-dependent ribosomal translocation step during translation elongation. During this step, the ribosome changes from the pre-translocational (PRE) to the post-translocational (POST) state as the newly formed A-site-bound peptidyl-tRNA and P-site-bound deacylated tRNA move to the P and E sites, respectively. Catalyzes the coordinated movement of the two tRNA molecules, the mRNA and conformational changes in the ribosome. The sequence is that of Elongation factor 2 from Methanoregula boonei (strain DSM 21154 / JCM 14090 / 6A8).